Consider the following 103-residue polypeptide: Small ribosomal subunit protein uS10 (103 aa).

Belongs to the universal ribosomal protein uS10 family. As to quaternary structure, part of the 30S ribosomal subunit.

Its function is as follows. Involved in the binding of tRNA to the ribosomes. This is Small ribosomal subunit protein uS10 from Saccharophagus degradans (strain 2-40 / ATCC 43961 / DSM 17024).